The primary structure comprises 181 residues: Macro domain-containing protein in sno 5'region (181 aa).

Positions 1–172 constitute a Macro domain; sequence MTTITLVQGD…TFARELGDAG (172 aa).

The protein belongs to the MacroD-type family.

The protein is Macro domain-containing protein in sno 5'region of Streptomyces nogalater.